We begin with the raw amino-acid sequence, 247 residues long: OCIA domain-containing protein 1 (247 aa).

The OCIA domain occupies 1-112 (MNGRADFREP…KKLENSPLGE (112 aa)). A phosphoserine mark is found at S108 and S116. The tract at residues 116–247 (SGELRRSLPP…VNKYGDTWDE (132 aa)) is disordered. 2 stretches are compositionally biased toward polar residues: residues 136 to 146 (SNVSGQSSFGT) and 168 to 177 (ASMNESTPTG). 2 stretches are compositionally biased toward basic and acidic residues: residues 192–210 (DSPK…KNRE) and 218–240 (HKTD…KVNK). Phosphoserine occurs at positions 193 and 198.

It belongs to the OCIAD1 family. As to quaternary structure, interacts with OCIAD2. Interacts with STAT3.

Its subcellular location is the endosome. Maintains stem cell potency. Increases STAT3 phosphorylation and controls ERK phosphorylation. May act as a scaffold, increasing STAT3 recruitment onto endosomes. The chain is OCIA domain-containing protein 1 from Rattus norvegicus (Rat).